Reading from the N-terminus, the 504-residue chain is ATP synthase subunit alpha (504 aa).

An ATP-binding site is contributed by 170–177 (GDRQTGKT).

This sequence belongs to the ATPase alpha/beta chains family. In terms of assembly, F-type ATPases have 2 components, CF(1) - the catalytic core - and CF(0) - the membrane proton channel. CF(1) has five subunits: alpha(3), beta(3), gamma(1), delta(1), epsilon(1). CF(0) has four main subunits: a(1), b(1), b'(1) and c(9-12).

The protein resides in the cellular thylakoid membrane. The enzyme catalyses ATP + H2O + 4 H(+)(in) = ADP + phosphate + 5 H(+)(out). Its function is as follows. Produces ATP from ADP in the presence of a proton gradient across the membrane. The alpha chain is a regulatory subunit. In Prochlorococcus marinus (strain NATL1A), this protein is ATP synthase subunit alpha.